A 315-amino-acid chain; its full sequence is Methionyl-tRNA formyltransferase (315 aa).

Ser113–Pro116 serves as a coordination point for (6S)-5,6,7,8-tetrahydrofolate.

Belongs to the Fmt family.

The catalysed reaction is L-methionyl-tRNA(fMet) + (6R)-10-formyltetrahydrofolate = N-formyl-L-methionyl-tRNA(fMet) + (6S)-5,6,7,8-tetrahydrofolate + H(+). In terms of biological role, attaches a formyl group to the free amino group of methionyl-tRNA(fMet). The formyl group appears to play a dual role in the initiator identity of N-formylmethionyl-tRNA by promoting its recognition by IF2 and preventing the misappropriation of this tRNA by the elongation apparatus. This chain is Methionyl-tRNA formyltransferase, found in Salmonella gallinarum (strain 287/91 / NCTC 13346).